A 41-amino-acid chain; its full sequence is Competence-stimulating peptide type 1 (41 aa).

The propeptide occupies 1-24 (MKNTVKLEQFVALKEKDLQKIKGG).

Belongs to the ComC family.

Its subcellular location is the secreted. In terms of biological role, acts as a pheromone, induces cells to develop competence for genetic transformation. This Streptococcus pneumoniae protein is Competence-stimulating peptide type 1 (comC1).